Consider the following 927-residue polypeptide: Nonsense-mediated mRNA decay factor SMG8 (927 aa).

Disordered regions lie at residues 543 to 581 (NTGK…NTAS), 611 to 636 (QARS…DTEN), and 643 to 662 (QEPA…AVST). Residues 551–566 (QDEDAGEDEAEEEEGQ) are compositionally biased toward acidic residues. Residues 613 to 633 (RSEQLSNSEQNTTRSGSSSVD) are compositionally biased toward polar residues. Residues 644–654 (EPAKKEAREDV) show a composition bias toward basic and acidic residues.

This sequence belongs to the SMG8 family.

In terms of biological role, involved in nonsense-mediated decay (NMD) of mRNAs containing premature stop codons. Probable component of kinase complex containing nonC and recruited to stalled ribosomes. The sequence is that of Nonsense-mediated mRNA decay factor SMG8 from Drosophila sechellia (Fruit fly).